The sequence spans 382 residues: Lipid-A-disaccharide synthase (382 aa).

This sequence belongs to the LpxB family.

It carries out the reaction 2-N,3-O-bis[(3R)-3-hydroxytetradecanoyl]-alpha-D-glucosaminyl 1-phosphate + UDP-2-N,3-O-bis[(3R)-3-hydroxytetradecanoyl]-alpha-D-glucosamine = lipid A disaccharide (E. coli) + UDP + H(+). It catalyses the reaction a lipid X + a UDP-2-N,3-O-bis[(3R)-3-hydroxyacyl]-alpha-D-glucosamine = a lipid A disaccharide + UDP + H(+). It functions in the pathway glycolipid biosynthesis; lipid IV(A) biosynthesis; lipid IV(A) from (3R)-3-hydroxytetradecanoyl-[acyl-carrier-protein] and UDP-N-acetyl-alpha-D-glucosamine: step 5/6. In terms of biological role, condensation of UDP-2,3-diacylglucosamine and 2,3-diacylglucosamine-1-phosphate to form lipid A disaccharide, a precursor of lipid A, a phosphorylated glycolipid that anchors the lipopolysaccharide to the outer membrane of the cell. The polypeptide is Lipid-A-disaccharide synthase (Enterobacter sp. (strain 638)).